We begin with the raw amino-acid sequence, 475 residues long: Ataxin-10 (475 aa).

Arg10 is modified (omega-N-methylarginine). Ser12 carries the post-translational modification Phosphoserine; by AURKB. Ser77 is modified (phosphoserine; by PLK1). Position 82 is a phosphothreonine; by PLK1 (Thr82). At Ser430 the chain carries Phosphoserine.

It belongs to the ataxin-10 family. Homooligomer. Interacts with GNB2. Interacts with IQCB1. Interacts with OGT. Polyubiquitinated. In terms of processing, phosphorylation at Ser-12 by AURKB promotes the association of ATXN10 with PLK1. Phosphorylation at Ser-77 and Thr-82 by PLK1 may play a role in the regulation of cytokinesis and may stimulate the proteasome-mediated degradation of ATXN10. Expressed in the central nervous system.

It is found in the cytoplasm. The protein localises to the perinuclear region. The protein resides in the midbody. It localises to the cytoskeleton. Its subcellular location is the cilium basal body. It is found in the microtubule organizing center. The protein localises to the centrosome. The protein resides in the centriole. Its function is as follows. May play a role in the regulation of cytokinesis. May play a role in signaling by stimulating protein glycosylation. Induces neuritogenesis by activating the Ras-MAP kinase pathway and is necessary for the survival of cerebellar neurons. Does not appear to play a major role in ciliogenesis. In Homo sapiens (Human), this protein is Ataxin-10 (ATXN10).